Here is a 200-residue protein sequence, read N- to C-terminus: Ras-related protein RABF2a (200 aa).

Glycine 17–serine 25 provides a ligand contact to GTP. Residues glutamine 39 to phenylalanine 47 carry the Effector region motif. GTP is bound by residues aspartate 65–glutamine 69, asparagine 123–aspartate 126, and serine 153–alanine 154. 2 S-geranylgeranyl cysteine lipidation sites follow: cysteine 198 and cysteine 199.

It belongs to the small GTPase superfamily. Rab family. As to quaternary structure, interacts with VPS9A. Interacts with EREX (via PX domain). Binds to VPS3. High in stem, root, and inflorescence.

The protein localises to the endosome membrane. It is found in the prevacuolar compartment membrane. Involved in the trafficking of soluble cargo proteins from the prevacuolar compartment to the central vacuole. Involved in vacuolar transport of storage proteins with EREX as effector. Regulates membrane trafficking to protein storage vacuoles (PSVs). This is Ras-related protein RABF2a (RABF2A) from Arabidopsis thaliana (Mouse-ear cress).